The primary structure comprises 352 residues: Phosphoribosylformylglycinamidine cyclo-ligase (352 aa).

The protein belongs to the AIR synthase family.

The protein localises to the cytoplasm. The catalysed reaction is 2-formamido-N(1)-(5-O-phospho-beta-D-ribosyl)acetamidine + ATP = 5-amino-1-(5-phospho-beta-D-ribosyl)imidazole + ADP + phosphate + H(+). It functions in the pathway purine metabolism; IMP biosynthesis via de novo pathway; 5-amino-1-(5-phospho-D-ribosyl)imidazole from N(2)-formyl-N(1)-(5-phospho-D-ribosyl)glycinamide: step 2/2. This is Phosphoribosylformylglycinamidine cyclo-ligase from Saccharophagus degradans (strain 2-40 / ATCC 43961 / DSM 17024).